Here is a 151-residue protein sequence, read N- to C-terminus: Large ribosomal subunit protein bL9 (151 aa).

Belongs to the bacterial ribosomal protein bL9 family.

Binds to the 23S rRNA. The protein is Large ribosomal subunit protein bL9 of Desulforapulum autotrophicum (strain ATCC 43914 / DSM 3382 / VKM B-1955 / HRM2) (Desulfobacterium autotrophicum).